A 162-amino-acid chain; its full sequence is Necrosis-inducing secreted protein 1 (162 aa).

Positions 1–19 (MQFLTSLAAAASLVSLASA) are cleaved as a signal peptide. N-linked (GlcNAc...) asparagine glycans are attached at residues Asn88, Asn126, Asn133, and Asn150. A BAK1/SERK3-binding region spans residues 103 to 132 (EYVIAASLFSLYGASSSPTVSNYNVTVNVG).

Belongs to the NIS1 effector family. As to quaternary structure, interacts with the host pattern recognition receptor (PRR)-associated kinases BAK1/SERK3, BKK1/SERK4 and BIK1.

It is found in the secreted. It localises to the host cytoplasm. Secreted effector that induces necrotic lesions in Nicotiana benthamiana. Interacts with the host receptor-like kinases (RLKs) BAK1/SERK3 and BKK1/SERK4, inhibits their kinase activity and suppresses INF1-induced pathogen-associated molecular pattern (PAMP)-triggered immunity (PTI) in N.benthamiana. Also interacts with the host receptor-like cytoplasmic kinase (RLCK) BIK1 and inhibits its kinase activity, thereby inhibiting PAMP-induced ROS generation. In PTI, phosphorylation relaying by RLKs and RLCKs is critical for the initiation of downstream signaling. This chain is Necrosis-inducing secreted protein 1, found in Colletotrichum orbiculare (strain 104-T / ATCC 96160 / CBS 514.97 / LARS 414 / MAFF 240422) (Cucumber anthracnose fungus).